A 623-amino-acid polypeptide reads, in one-letter code: Glutathione import ATP-binding protein GsiA (623 aa).

ABC transporter domains lie at 15 to 269 and 314 to 564; these read VENL…RALL and LRVR…RKLL. ATP contacts are provided by residues 49-56 and 357-364; these read GESGSGKS.

This sequence belongs to the ABC transporter superfamily. Glutathione importer (TC 3.A.1.5.11) family. In terms of assembly, the complex is composed of two ATP-binding proteins (GsiA), two transmembrane proteins (GsiC and GsiD) and a solute-binding protein (GsiB).

The protein localises to the cell inner membrane. The catalysed reaction is glutathione(out) + ATP + H2O = glutathione(in) + ADP + phosphate + H(+). Part of the ABC transporter complex GsiABCD involved in glutathione import. Responsible for energy coupling to the transport system. The polypeptide is Glutathione import ATP-binding protein GsiA (Shigella flexneri).